An 845-amino-acid chain; its full sequence is Protein SEY1 (845 aa).

A coiled-coil region spans residues 1 to 29 (MELNVDSAKQLLAEHEQELQSAHDAHSIL). The Cytoplasmic segment spans residues 1–749 (MELNVDSAKQ…KRATVSSIAQ (749 aa)). The region spanning 112 to 334 (GFGYDLCAVL…DPNFVFKTEY (223 aa)) is the GB1/RHD3-type G domain. GTP is bound at residue 122–129 (GSQSTGKS). A helical transmembrane segment spans residues 750–770 (VPLWMYGVMLVLGWNELMAIL). The Lumenal segment spans residues 771–773 (SSP). Residues 774-794 (VYFAFLLVLIASAYIVWRLNL) form a helical membrane-spanning segment. At 795-845 (SGPLISVLRAVANEVHRLADAQLRTHFSQPLREPRPPAESRPAEQIELEPN) the chain is on the cytoplasmic side. The interval 823 to 845 (QPLREPRPPAESRPAEQIELEPN) is disordered. Over residues 826-838 (REPRPPAESRPAE) the composition is skewed to basic and acidic residues.

The protein belongs to the TRAFAC class dynamin-like GTPase superfamily. GB1/RHD3 GTPase family. RHD3 subfamily.

Its subcellular location is the endoplasmic reticulum membrane. Cooperates with the reticulon proteins and tubule-shaping DP1 family proteins to generate and maintain the structure of the tubular endoplasmic reticulum network. Has GTPase activity, which is required for its function in ER organization. This is Protein SEY1 from Mycosarcoma maydis (Corn smut fungus).